The sequence spans 216 residues: Thiamine-phosphate synthase (216 aa).

Residues 41 to 45 and asparagine 73 each bind 4-amino-2-methyl-5-(diphosphooxymethyl)pyrimidine; that span reads QYREK. 2 residues coordinate Mg(2+): aspartate 74 and aspartate 93. Serine 111 contributes to the 4-amino-2-methyl-5-(diphosphooxymethyl)pyrimidine binding site. 137–139 contacts 2-[(2R,5Z)-2-carboxy-4-methylthiazol-5(2H)-ylidene]ethyl phosphate; the sequence is TTT. Lysine 140 is a 4-amino-2-methyl-5-(diphosphooxymethyl)pyrimidine binding site. 2-[(2R,5Z)-2-carboxy-4-methylthiazol-5(2H)-ylidene]ethyl phosphate contacts are provided by residues glycine 168 and 188–189; that span reads VS.

The protein belongs to the thiamine-phosphate synthase family. Mg(2+) is required as a cofactor.

The catalysed reaction is 2-[(2R,5Z)-2-carboxy-4-methylthiazol-5(2H)-ylidene]ethyl phosphate + 4-amino-2-methyl-5-(diphosphooxymethyl)pyrimidine + 2 H(+) = thiamine phosphate + CO2 + diphosphate. It carries out the reaction 2-(2-carboxy-4-methylthiazol-5-yl)ethyl phosphate + 4-amino-2-methyl-5-(diphosphooxymethyl)pyrimidine + 2 H(+) = thiamine phosphate + CO2 + diphosphate. It catalyses the reaction 4-methyl-5-(2-phosphooxyethyl)-thiazole + 4-amino-2-methyl-5-(diphosphooxymethyl)pyrimidine + H(+) = thiamine phosphate + diphosphate. It participates in cofactor biosynthesis; thiamine diphosphate biosynthesis; thiamine phosphate from 4-amino-2-methyl-5-diphosphomethylpyrimidine and 4-methyl-5-(2-phosphoethyl)-thiazole: step 1/1. In terms of biological role, condenses 4-methyl-5-(beta-hydroxyethyl)thiazole monophosphate (THZ-P) and 2-methyl-4-amino-5-hydroxymethyl pyrimidine pyrophosphate (HMP-PP) to form thiamine monophosphate (TMP). The polypeptide is Thiamine-phosphate synthase (Chloroflexus aurantiacus (strain ATCC 29366 / DSM 635 / J-10-fl)).